The following is a 331-amino-acid chain: Phosphatidylinositol transfer protein 4 (331 aa).

It belongs to the PtdIns transfer protein family. PI transfer class IIA subfamily.

Functionally, catalyzes the transfer of PtdIns and phosphatidylcholine between membranes. The polypeptide is Phosphatidylinositol transfer protein 4 (pitD) (Dictyostelium discoideum (Social amoeba)).